A 1205-amino-acid chain; its full sequence is PAN2-PAN3 deadenylation complex catalytic subunit Pan2 (1205 aa).

WD repeat units lie at residues 153-193, 195-231, 244-280, and 328-367; these read DESE…QKYA, ETPG…VEHE, VHGN…AITP, and PVGP…SFNP. A linker region spans residues 368–484; the sequence is YSRETEFALP…PTGREEEPLH (117 aa). The 440-residue stretch at 485–924 folds into the USP domain; the sequence is TVSKKYRKVT…VPAILYYVKR (440 aa). Position 784 is a phosphoserine (Ser-784). The 173-residue stretch at 975-1147 folds into the Exonuclease domain; sequence VGLDAEFVTL…EDARTALQLY (173 aa). 4 residues coordinate a divalent metal cation: Asp-978, Glu-980, Asp-1087, and Asp-1139. Positions 1179 to 1205 are disordered; that stretch reads WKVPEPESQSSPKSKAGLRPGALGWVG. Over residues 1184–1193 the composition is skewed to low complexity; sequence PESQSSPKSK. A Phosphoserine modification is found at Ser-1189.

It belongs to the peptidase C19 family. PAN2 subfamily. Forms a heterotrimer with an asymmetric homodimer of the regulatory subunit PAN3 to form the poly(A)-nuclease (PAN) deadenylation complex. Interacts with PAN3 isoform 1/Pan3L and isoform 3/Pan3S. Interacts with ZFP36. A divalent metal cation serves as cofactor.

It localises to the cytoplasm. It is found in the P-body. The protein localises to the nucleus. The catalysed reaction is Exonucleolytic cleavage of poly(A) to 5'-AMP.. Positively regulated by the regulatory subunit PAN3. In terms of biological role, catalytic subunit of the poly(A)-nuclease (PAN) deadenylation complex, one of two cytoplasmic mRNA deadenylases involved in general and miRNA-mediated mRNA turnover. PAN specifically shortens poly(A) tails of RNA and the activity is stimulated by poly(A)-binding protein (PABP). PAN deadenylation is followed by rapid degradation of the shortened mRNA tails by the CCR4-NOT complex. Deadenylated mRNAs are then degraded by two alternative mechanisms, namely exosome-mediated 3'-5' exonucleolytic degradation, or deadenylation-dependent mRNA decaping and subsequent 5'-3' exonucleolytic degradation by XRN1. Also acts as an important regulator of the HIF1A-mediated hypoxic response. Required for HIF1A mRNA stability independent of poly(A) tail length regulation. In Rattus norvegicus (Rat), this protein is PAN2-PAN3 deadenylation complex catalytic subunit Pan2.